The primary structure comprises 496 residues: 4-O-methyl-glucuronoyl methylesterase 1 (496 aa).

The signal sequence occupies residues 1 to 19; that stretch reads MKSTVASALLVLAGTAVQA. The CBM1 domain maps to 20 to 55; it reads QSGPWQQCGGIGWQGPFTCVSGHTCQVLNDWYHQCV. The segment at 57–151 is disordered; sequence GGGPSPPPTS…RLPDPFTFHN (95 aa). A compositionally biased stretch (pro residues) spans 59 to 125; the sequence is GPSPPPTSPP…SPPPTSPPPS (67 aa). Intrachain disulfides connect C129/C163, C307/C443, and C339/C415. Positions 306–311 match the GXSYXG catalytic site motif motif; the sequence is GCSRNG. Catalysis depends on S308, which acts as the Nucleophile. Positions 312, 354, 362, and 406 each coordinate substrate. H442 serves as the catalytic Proton donor/acceptor.

It belongs to the carbohydrate esterase 15 (CE15) family.

It is found in the secreted. The catalysed reaction is a 4-O-methyl-alpha-D-glucuronosyl ester derivative + H2O = 4-O-methyl-alpha-D-glucuronate derivative + an alcohol + H(+). Its function is as follows. Glucuronoyl esterase which may play a significant role in biomass degradation, as it is considered to disconnect hemicellulose from lignin through the hydrolysis of the ester bond between 4-O-methyl-D-glucuronic acid residues of glucuronoxylans and aromatic alcohols of lignin. Cleaves native lignin-carbohydrate (LC) ester bonds from LC complex preparations of spruce (softwood) and birch (hardwood), containing mainly hemicelluloses with partially acetylated glucomannans in spruce and partially acetylated xylan in birch. Can hydrolyze benzyl glucuronic acid (BnGlcA), allyl glucuronic acid (allylGlcA) and to a lower degree methyl glucuronic acid (MeGlcA) in vitro. The protein is 4-O-methyl-glucuronoyl methylesterase 1 of Sodiomyces alcalophilus (Acremonium alcalophilum).